Consider the following 339-residue polypeptide: Tetraacyldisaccharide 4'-kinase (339 aa).

58–65 (TVGGSGKT) is an ATP binding site.

Belongs to the LpxK family.

The enzyme catalyses a lipid A disaccharide + ATP = a lipid IVA + ADP + H(+). Its pathway is glycolipid biosynthesis; lipid IV(A) biosynthesis; lipid IV(A) from (3R)-3-hydroxytetradecanoyl-[acyl-carrier-protein] and UDP-N-acetyl-alpha-D-glucosamine: step 6/6. Functionally, transfers the gamma-phosphate of ATP to the 4'-position of a tetraacyldisaccharide 1-phosphate intermediate (termed DS-1-P) to form tetraacyldisaccharide 1,4'-bis-phosphate (lipid IVA). The protein is Tetraacyldisaccharide 4'-kinase of Shewanella baltica (strain OS195).